A 30-amino-acid chain; its full sequence is Cyclotide hyen-E (30 aa).

Residues 1–30 (GVPCGESCVYIPCFTGIINCSCRDKVCYNN) constitute a cross-link (cyclopeptide (Gly-Asn)). Cystine bridges form between cysteine 4/cysteine 20, cysteine 8/cysteine 22, and cysteine 13/cysteine 27.

In terms of processing, this is a cyclic peptide. Detected in stems (at protein level).

Functionally, probably participates in a plant defense mechanism. Has cytotoxic activity against HUVEC cells (LC(50)= 2.17 uM) and various cancer cells including HeLa (LC(50)= 3.05 uM), MCF-7 and K562. Displays very weak hemolytic activity. Binds to and induces leakage in phospholipd membranes, particularly ones containing 1-palmitoyl-2-oleophosphatidylethanolamine (POPE). The polypeptide is Cyclotide hyen-E (Pigea enneasperma (Spade flower)).